The sequence spans 301 residues: tRNA pseudouridine synthase B (301 aa).

The active-site Nucleophile is D38.

The protein belongs to the pseudouridine synthase TruB family. Type 1 subfamily.

The catalysed reaction is uridine(55) in tRNA = pseudouridine(55) in tRNA. Responsible for synthesis of pseudouridine from uracil-55 in the psi GC loop of transfer RNAs. The chain is tRNA pseudouridine synthase B from Clostridioides difficile (strain 630) (Peptoclostridium difficile).